Consider the following 51-residue polypeptide: DNA-binding protein (51 aa).

Residues 1-51 (MVYRRRRSRSADGTYTRRRRSSGYRRRPGRPRTYRRSRSATRRSGYRRRRY) form a disordered region. 2 repeat units span residues 5–10 (RRRSRS) and 17–22 (RRRRSS). The segment at 5–22 (RRRSRSADGTYTRRRRSS) is 2 X 6 AA repeats of R-R-R-R-S-S. The span at 16-51 (TRRRRSSGYRRRPGRPRTYRRSRSATRRSGYRRRRY) shows a compositional bias: basic residues.

Probably phosphorylated in infected cells.

The protein localises to the virion. In terms of biological role, thought to be responsible for DNA condensation during packaging of the nucleocapsids. The sequence is that of DNA-binding protein (P6.5) from Orgyia pseudotsugata (Douglas-fir tussock moth).